We begin with the raw amino-acid sequence, 207 residues long: Small ribosomal subunit protein uS4 (207 aa).

Residues 96 to 156 (SRLDNTVYRM…KKSHKQSRIR (61 aa)) enclose the S4 RNA-binding domain.

This sequence belongs to the universal ribosomal protein uS4 family. In terms of assembly, part of the 30S ribosomal subunit. Contacts protein S5. The interaction surface between S4 and S5 is involved in control of translational fidelity.

In terms of biological role, one of the primary rRNA binding proteins, it binds directly to 16S rRNA where it nucleates assembly of the body of the 30S subunit. With S5 and S12 plays an important role in translational accuracy. The polypeptide is Small ribosomal subunit protein uS4 (Blochmanniella pennsylvanica (strain BPEN)).